A 341-amino-acid polypeptide reads, in one-letter code: Ribosomal RNA small subunit methyltransferase H (341 aa).

Residues 47-49 (GGY), D64, F91, D109, and Q116 contribute to the S-adenosyl-L-methionine site. The tract at residues 292 to 319 (VAASEEEASRNPRARSAKLRAGVRTEAP) is disordered.

The protein belongs to the methyltransferase superfamily. RsmH family.

Its subcellular location is the cytoplasm. The enzyme catalyses cytidine(1402) in 16S rRNA + S-adenosyl-L-methionine = N(4)-methylcytidine(1402) in 16S rRNA + S-adenosyl-L-homocysteine + H(+). Its function is as follows. Specifically methylates the N4 position of cytidine in position 1402 (C1402) of 16S rRNA. The sequence is that of Ribosomal RNA small subunit methyltransferase H from Rhizobium meliloti (strain 1021) (Ensifer meliloti).